Here is a 137-residue protein sequence, read N- to C-terminus: uncharacterized protein (137 aa).

The 76-residue stretch at 30 to 105 folds into the Sm domain; it reads SLLCVFTALR…IRFIQIPDKI (76 aa).

This is an uncharacterized protein from Dictyostelium discoideum (Social amoeba).